Here is a 285-residue protein sequence, read N- to C-terminus: BAG family molecular chaperone regulator 2 (285 aa).

Residues 37–113 form the Ubiquitin-like domain; the sequence is RGIRVRVKYG…LILIEDPISQ (77 aa). In terms of domain architecture, BAG spans 132–210; the sequence is AISDISFQVE…KYVEALDLLK (79 aa). Position 244 is a phosphoserine (Ser244).

Binds to the ATPase domain of HSP70/HSC70 chaperones.

Functionally, co-chaperone that regulates diverse cellular pathways, such as programmed cell death and stress responses. This chain is BAG family molecular chaperone regulator 2 (BAG2), found in Arabidopsis thaliana (Mouse-ear cress).